The following is a 90-amino-acid chain: Protein LURE 1.4 (90 aa).

The signal sequence occupies residues 1 to 19 (MKCPSIFLTLLIFVSSCTS). A glycan (N-linked (GlcNAc...) asparagine) is linked at N23. 3 cysteine pairs are disulfide-bonded: C58-C75, C61-C82, and C65-C84. The tract at residues 67-87 (RRGKYIRTCSFERKLCRCSIS) is PRK6 binding.

The protein belongs to the DEFL family. As to quaternary structure, binds to PRK6 LRRs. Expressed in the pistil. Detected exclusively in the synergid cells.

The protein resides in the secreted. Pollen tube attractants guiding pollen tubes to the ovular micropyle. The polypeptide is Protein LURE 1.4 (Arabidopsis thaliana (Mouse-ear cress)).